The following is a 173-amino-acid chain: Large ribosomal subunit protein uL15 (173 aa).

Residues 1-11 show a composition bias toward basic and acidic residues; it reads MKLNEIRDNQG. Residues 1–50 form a disordered region; the sequence is MKLNEIRDNQGARKSRVRVGRGIGSGLGKTGGRGQKGQKSRSGVSINGFE. Positions 21-35 are enriched in gly residues; sequence RGIGSGLGKTGGRGQ.

The protein belongs to the universal ribosomal protein uL15 family. In terms of assembly, part of the 50S ribosomal subunit.

Its function is as follows. Binds to the 23S rRNA. In Rhizorhabdus wittichii (strain DSM 6014 / CCUG 31198 / JCM 15750 / NBRC 105917 / EY 4224 / RW1) (Sphingomonas wittichii), this protein is Large ribosomal subunit protein uL15.